We begin with the raw amino-acid sequence, 883 residues long: Integrator complex subunit 6 (883 aa).

One can recognise a VWFA domain in the interval 3-227; it reads ILLFLIDTSA…QCLESLVQKV (225 aa). The Inhibitory loop motif lies at 625–632; it reads MMIDEADE. The disordered stretch occupies residues 666 to 686; it reads RRQSPAVNSHIGGKGPPAPMT. A Phosphoserine modification is found at Ser800.

The protein belongs to the Integrator subunit 6 family. In terms of assembly, component of the Integrator complex, composed of core subunits INTS1, INTS2, INTS3, INTS4, INTS5, INTS6, INTS7, INTS8, INTS9/RC74, INTS10, INTS11/CPSF3L, INTS12, INTS13, INTS14 and INTS15. The core complex associates with protein phosphatase 2A subunits PPP2CA and PPP2R1A, to form the Integrator-PP2A (INTAC) complex.

Its subcellular location is the nucleus. It is found in the chromosome. Component of the integrator complex, a multiprotein complex that terminates RNA polymerase II (Pol II) transcription in the promoter-proximal region of genes. The integrator complex provides a quality checkpoint during transcription elongation by driving premature transcription termination of transcripts that are unfavorably configured for transcriptional elongation: the complex terminates transcription by (1) catalyzing dephosphorylation of the C-terminal domain (CTD) of Pol II subunit POLR2A/RPB1 and SUPT5H/SPT5, (2) degrading the exiting nascent RNA transcript via endonuclease activity and (3) promoting the release of Pol II from bound DNA. The integrator complex is also involved in terminating the synthesis of non-coding Pol II transcripts, such as enhancer RNAs (eRNAs), small nuclear RNAs (snRNAs), telomerase RNAs and long non-coding RNAs (lncRNAs). Within the integrator complex, INTS6 acts as a molecular adapter that promotes assembly of protein phosphatase 2A (PP2A) subunits to the integrator core complex, promoting recruitment of PP2A to transcription pause-release checkpoint. Mediates recruitment of cytoplasmic dynein to the nuclear envelope, probably as component of the integrator complex. This is Integrator complex subunit 6 (Ints6) from Mus musculus (Mouse).